We begin with the raw amino-acid sequence, 201 residues long: Adenylyl-sulfate kinase (201 aa).

35-42 (GLSGSGKS) provides a ligand contact to ATP. The active-site Phosphoserine intermediate is the Ser109.

It belongs to the APS kinase family.

The enzyme catalyses adenosine 5'-phosphosulfate + ATP = 3'-phosphoadenylyl sulfate + ADP + H(+). It functions in the pathway sulfur metabolism; hydrogen sulfide biosynthesis; sulfite from sulfate: step 2/3. Functionally, catalyzes the synthesis of activated sulfate. In Escherichia coli (strain ATCC 8739 / DSM 1576 / NBRC 3972 / NCIMB 8545 / WDCM 00012 / Crooks), this protein is Adenylyl-sulfate kinase.